Here is a 183-residue protein sequence, read N- to C-terminus: uncharacterized protein (183 aa).

This is an uncharacterized protein from Acanthamoeba polyphaga mimivirus (APMV).